The chain runs to 277 residues: Undecaprenyl-diphosphatase (277 aa).

8 consecutive transmembrane segments (helical) span residues 1–21 (MDIIQAIIIGIVQGLTEFLPV), 38–58 (SSLAFDVFLHLGSLIAVLWFF), 93–113 (LVWYVIIATIPVGLVGVLFES), 118–138 (LFAGALYVPAFFLFVTGTILY), 168–188 (AILPGLSRSGTTIAAGLVIGL), 191–211 (EFAAKFSFILSIPAILGAFVV), 222–242 (FNALAILFGFLAALISGYLAI), and 256–276 (IFAYYCWIVGIIVFMGSITHL).

This sequence belongs to the UppP family.

Its subcellular location is the cell membrane. It carries out the reaction di-trans,octa-cis-undecaprenyl diphosphate + H2O = di-trans,octa-cis-undecaprenyl phosphate + phosphate + H(+). Its function is as follows. Catalyzes the dephosphorylation of undecaprenyl diphosphate (UPP). The protein is Undecaprenyl-diphosphatase of Methanobrevibacter smithii (strain ATCC 35061 / DSM 861 / OCM 144 / PS).